The primary structure comprises 412 residues: Serine hydroxymethyltransferase (412 aa).

(6S)-5,6,7,8-tetrahydrofolate is bound by residues leucine 125 and 129-131 (GHL). Position 234 is an N6-(pyridoxal phosphate)lysine (lysine 234). Glutamate 250 contacts (6S)-5,6,7,8-tetrahydrofolate.

The protein belongs to the SHMT family. As to quaternary structure, homodimer. Pyridoxal 5'-phosphate is required as a cofactor.

The protein resides in the cytoplasm. The catalysed reaction is (6R)-5,10-methylene-5,6,7,8-tetrahydrofolate + glycine + H2O = (6S)-5,6,7,8-tetrahydrofolate + L-serine. The protein operates within one-carbon metabolism; tetrahydrofolate interconversion. Its pathway is amino-acid biosynthesis; glycine biosynthesis; glycine from L-serine: step 1/1. Its function is as follows. Catalyzes the reversible interconversion of serine and glycine with tetrahydrofolate (THF) serving as the one-carbon carrier. This reaction serves as the major source of one-carbon groups required for the biosynthesis of purines, thymidylate, methionine, and other important biomolecules. Also exhibits THF-independent aldolase activity toward beta-hydroxyamino acids, producing glycine and aldehydes, via a retro-aldol mechanism. This chain is Serine hydroxymethyltransferase, found in Deinococcus geothermalis (strain DSM 11300 / CIP 105573 / AG-3a).